A 140-amino-acid polypeptide reads, in one-letter code: Putative pre-16S rRNA nuclease (140 aa).

Belongs to the YqgF nuclease family.

It localises to the cytoplasm. Functionally, could be a nuclease involved in processing of the 5'-end of pre-16S rRNA. In Chlorobium chlorochromatii (strain CaD3), this protein is Putative pre-16S rRNA nuclease.